We begin with the raw amino-acid sequence, 584 residues long: ATP-dependent ubiquitin transferase-like protein Cap2 (584 aa).

The segment at M1–E137 is E2-like domain. C90 (for E2-like domain) is an active-site residue. Residues G138 to D338 form a linker domain region. The interval V339–E584 is adenylation plus E1-like domain. The active-site For E1-like domain is the C522.

This sequence in the C-terminal section; belongs to the HesA/MoeB/ThiF family. In terms of assembly, interacts with CD-NTase DncV in the presence and absence of phage T2. A Cap2 dimer is bound on either side by a DncV monomer.

Functionally, CD-NTase priming component of a CBASS antiviral system. CBASS (cyclic oligonucleotide-based antiphage signaling system) provides immunity against bacteriophages. The CD-NTase protein (DncV) synthesizes cyclic nucleotides in response to infection; these serve as specific second messenger signals. The signals activate a diverse range of effectors, leading to bacterial cell death and thus abortive phage infection. A type II-A(GA) CBASS system. Its function is as follows. Primes DncV; acts as a protein transferase, conjugating DncV, the CD-NTase, to unidentified target(s) in the cell via an E1-E2 ubiquitin transferase-like mechanism. During the conjugation reaction DncV is probably transiently attached to AMP. Protein conjugation requires ATP. Protects E.coli against phage infection. When the CBASS operon (capV-dncV-cap2-cap3) is introduced in E.coli MG1655 there is about 100-fold protection against phages P1 and T2. When the operon is introduced in E.coli MG1655 there is a more than 10(3) decrease in the efficiency of T2 plaque formation. Protects 100-fold against phage T5, offers no protection against T7. When the operon is introduced in E.coli MG1655 it protects against phages T2, T4, T5 and T6. Another paper shows the operon confers protection against phages P1, T2, T5 and T6 but not T4 or lambda. This chain is ATP-dependent ubiquitin transferase-like protein Cap2, found in Vibrio cholerae serotype O1 (strain ATCC 39315 / El Tor Inaba N16961).